Here is a 356-residue protein sequence, read N- to C-terminus: Septin-12 (356 aa).

Positions 1–23 are disordered; that stretch reads MDERRTPSPCSSRPSSPRTPPCE. Low complexity predominate over residues 7-16; it reads PSPCSSRPSS. Residues 44–315 enclose the Septin-type G domain; sequence TGFEFNIMVV…ENYRVLRLNE (272 aa). The interaction with SEPTIN7 stretch occupies residues 44–317; it reads TGFEFNIMVV…YRVLRLNESH (274 aa). The G1 motif stretch occupies residues 54–61; sequence GQSGLGKS. GTP is bound by residues 54 to 61, Thr87, Gly113, 193 to 201, Gly249, and Arg264; these read GQSGLGKS and RADSLTIEE. Residues 110-113 are G3 motif; that stretch reads DTPG. The G4 motif stretch occupies residues 192–195; that stretch reads ARAD. A self-association (via N-terminus) to polymerize octameric septin 12-7-6-2/4-2/4-6-7-12 filaments region spans residues 256-356; sequence VNGRCVLGRK…RSKDPRDDEC (101 aa). The disordered stretch occupies residues 330–356; the sequence is PASPGQLMAPGPEKVRKRSKDPRDDEC.

It belongs to the TRAFAC class TrmE-Era-EngA-EngB-Septin-like GTPase superfamily. Septin GTPase family. In terms of assembly, septins polymerize into heterooligomeric protein complexes that form filaments, and can associate with cellular membranes, actin filaments and microtubules. GTPase activity is required for filament formation. Interacts with SEPTIN6 and SEPTIN11. Self-associates. Component of a octameric complex consisting of SEPTIN12, SEPTIN7, SEPTIN6 and SEPTIN2 or SEPTIN4 in the order 12-7-6-2-2-6-7-12 or 12-7-6-4-4-6-7-12 and located in the sperm annulus; the octamer polymerizes into filaments via the SEPTIN12 N- and C-termini; the SEPTIN12:SEPTIN7 association is mediated by the GTP-binding domains. Interacts with SPAG4 and LMNB1. Associates with alpha- and beta-tubulins. Predominantly expressed in testis and epididymis. Component of the sperm tail annulus (at protein level).

The protein localises to the cytoplasm. The protein resides in the cytoskeleton. It is found in the spindle. It localises to the cell projection. Its subcellular location is the cilium. The protein localises to the flagellum. Filament-forming cytoskeletal GTPase. May play a role in cytokinesis (Potential). Involved in spermatogenesis. Involved in the morphogenesis of sperm heads and the elongation of sperm tails probably implicating the association with alpha- and beta-tubulins. Forms a filamentous structure with SEPTIN7, SEPTIN6, SEPTIN2 and probably SEPTIN4 at the sperm annulus which is required for the structural integrity and motility of the sperm tail during postmeiotic differentiation. The protein is Septin-12 of Rattus norvegicus (Rat).